The chain runs to 183 residues: MLTMDDIVREGHPALREVATEVTFPLSDEEKKLGREMLEFLINSQDEELAEKYGLRGGVGIAAPQLAVTKRFLAIHVHDEKDRLYSYVLYNPKIRSHSVQQACLSGGEGCLSVDREVPGYVVRSERVTIDAFDENGTPLKLRFKGYPAIVIQHEIDHLNGIMFYDHINKENPSYLPPDVDVFG.

Positions 110 and 153 each coordinate Fe cation. E154 is a catalytic residue. Fe cation is bound at residue H157.

This sequence belongs to the polypeptide deformylase family. Requires Fe(2+) as cofactor.

It catalyses the reaction N-terminal N-formyl-L-methionyl-[peptide] + H2O = N-terminal L-methionyl-[peptide] + formate. Its function is as follows. Removes the formyl group from the N-terminal Met of newly synthesized proteins. Requires at least a dipeptide for an efficient rate of reaction. N-terminal L-methionine is a prerequisite for activity but the enzyme has broad specificity at other positions. The protein is Peptide deformylase of Listeria monocytogenes serotype 4b (strain CLIP80459).